Reading from the N-terminus, the 351-residue chain is Mediator of RNA polymerase II transcription subunit 4 (351 aa).

A coiled-coil region spans residues 30 to 68; that stretch reads QKLAEELLAAEAELSKSLKLLETHQNNNARLQQLRQETS. Disordered regions lie at residues 156 to 217 and 256 to 351; these read TQTQ…PAHL and PRGY…DEDD. The segment covering 163–177 has biased composition (polar residues); that stretch reads NSFNLSFNGTVSTPI. Over residues 182 to 198 the composition is skewed to low complexity; sequence PTPTTTNDTQPSTQLPP. Over residues 257 to 308 the composition is skewed to basic and acidic residues; the sequence is RGYDPAEQERRRVAEEKARREAEERARLEREEAERKGREERERMAREREAAR. Residues 262–311 are a coiled coil; that stretch reads AEQERRRVAEEKARREAEERARLEREEAERKGREERERMAREREAARLRN. Residues 340–351 are compositionally biased toward acidic residues; it reads ADDDEDDEDEDD.

The protein belongs to the Mediator complex subunit 4 family. As to quaternary structure, component of the Mediator complex.

The protein localises to the nucleus. In terms of biological role, component of the Mediator complex, a coactivator involved in the regulated transcription of nearly all RNA polymerase II-dependent genes. Mediator functions as a bridge to convey information from gene-specific regulatory proteins to the basal RNA polymerase II transcription machinery. Mediator is recruited to promoters by direct interactions with regulatory proteins and serves as a scaffold for the assembly of a functional preinitiation complex with RNA polymerase II and the general transcription factors. This Chaetomium globosum (strain ATCC 6205 / CBS 148.51 / DSM 1962 / NBRC 6347 / NRRL 1970) (Soil fungus) protein is Mediator of RNA polymerase II transcription subunit 4 (MED4).